We begin with the raw amino-acid sequence, 471 residues long: NALCN channel auxiliary factor 2 (471 aa).

The helical transmembrane segment at 47–67 threads the bilayer; the sequence is LASLLFFTVLLADHLWLCAGA. Residues 76–115 form a disordered region; that stretch reads SAMRPPWGAGRERQPVPPRAVLPPPPPSPGEPSASSGTCG. Pro residues predominate over residues 90–105; that stretch reads PVPPRAVLPPPPPSPG. Asparagine 120 carries an N-linked (GlcNAc...) asparagine glycan. Disordered stretches follow at residues 158–178 and 399–424; these read EPTT…APEF and HYHP…GGSR. Residues 161 to 171 show a composition bias toward pro residues; that stretch reads TPAPPLRPPDS. Residues 432 to 452 form a helical membrane-spanning segment; the sequence is LCVLVLILLHTVVSFSSSQSG.

This sequence belongs to the NALF family.

It localises to the membrane. Functionally, probable component of the NALCN channel complex, a channel that regulates the resting membrane potential and controls neuronal excitability. This Mus musculus (Mouse) protein is NALCN channel auxiliary factor 2 (Nalf2).